The chain runs to 539 residues: MSATKYIFVTGGVTSSLGKGIVAASLAKLLQARGFSVTIQKFDPYLNIDPGTLNPYEHGECYVTDDGAETDLDLGHYERFLGTPTSQGNNITTGRIYNTVITKERQGAFLGKTVQVVPHITDEIKRNIQLLGESGKYDIVITEIGGCVGDIESLPFLEAVRQFRWEMGPTDTLVIHLTLVPYLNAAKELKTKPTQHSVKLLSETGIHPDILVCRTEHPLPAELRKKVALFCNVNINSVIESIDAETIYDVPLLMKKEKLDERVLSKLKLSSKNEPDLESWKVFLGKLKNPLSEVNIALVGKYVELPDAYKSISEAFIHAGAMNECKVKIRWISSEQLQKDNLQHHLGFADGILVAPGFGERGLEGKIAAVEFARENNIPFFGICLGMQCAVIEFARNVLGLKDANSTEMNKDTANPVINMMESQKNVTMKGGTMRLGAYPCELTKGSKAHAIYGKSKIMERHRHRYEFNNKYLKQYEKEGMLATGINPETKLVEIVELRDHPFFIGSQFHPELKSTVENPHPIFVKFVKAANDFAKGKK.

The segment at 1–269 (MSATKYIFVT…DERVLSKLKL (269 aa)) is amidoligase domain. Position 15 (serine 15) interacts with CTP. A UTP-binding site is contributed by serine 15. Residue 16 to 21 (SLGKGI) coordinates ATP. L-glutamine is bound at residue tyrosine 56. Residue aspartate 73 coordinates ATP. Residues aspartate 73 and glutamate 143 each contribute to the Mg(2+) site. Residues 150-152 (DIE), 190-195 (KTKPTQ), and lysine 226 contribute to the CTP site. Residues 190 to 195 (KTKPTQ) and lysine 226 contribute to the UTP site. The Glutamine amidotransferase type-1 domain maps to 295-537 (NIALVGKYVE…VKAANDFAKG (243 aa)). L-glutamine is bound at residue glycine 357. Cysteine 384 serves as the catalytic Nucleophile; for glutamine hydrolysis. Residues 385–388 (LGMQ), glutamate 408, and arginine 465 each bind L-glutamine. Residues histidine 510 and glutamate 512 contribute to the active site.

It belongs to the CTP synthase family. Homotetramer.

It carries out the reaction UTP + L-glutamine + ATP + H2O = CTP + L-glutamate + ADP + phosphate + 2 H(+). The catalysed reaction is L-glutamine + H2O = L-glutamate + NH4(+). The enzyme catalyses UTP + NH4(+) + ATP = CTP + ADP + phosphate + 2 H(+). Its pathway is pyrimidine metabolism; CTP biosynthesis via de novo pathway; CTP from UDP: step 2/2. Its activity is regulated as follows. Allosterically activated by GTP, when glutamine is the substrate; GTP has no effect on the reaction when ammonia is the substrate. The allosteric effector GTP functions by stabilizing the protein conformation that binds the tetrahedral intermediate(s) formed during glutamine hydrolysis. Inhibited by the product CTP, via allosteric rather than competitive inhibition. Functionally, catalyzes the ATP-dependent amination of UTP to CTP with either L-glutamine or ammonia as the source of nitrogen. Regulates intracellular CTP levels through interactions with the four ribonucleotide triphosphates. The sequence is that of CTP synthase from Cytophaga hutchinsonii (strain ATCC 33406 / DSM 1761 / CIP 103989 / NBRC 15051 / NCIMB 9469 / D465).